We begin with the raw amino-acid sequence, 567 residues long: MHGRLKVKTSEEQAEAKRLEREQKLKLYQAATQTVFQKRQAGELDESVLELTSQILGANPDFATLWNCRREVLQQLEVQKSPEELATLVKAELGFLESCLRVNPKSYGTWHHRCWLLSRLPEPNWARELELCARFLEVDERNFHCWDYRRFVAAQAAVPPAEELAFTDSLITRNFSNYSSWHYRSCLLPQLHPQPDSGPQGRLPEDVLLKELELVQNAFFTDPNDQSAWFYHRWLLGRADPQDALRCLHVSRDEACLTVSFSRPLLVGSGMETLLLMVDESPLAVEWRTPEGRNRPSHIWLCDLPATSLNDQLPQHTFRVIWTAGDAQKECVLLKGRQEGWCRDSATDEQLFRCELSVEKSTVLQSELESCKELQELEPENKWCLLTIILLMRALDPLQYEKETLQYFQTLKAVDPMRAAYLDDLRSKFLLENSVLKMEYAEVRVLHLGHKDLTVLCHLEQLLLVTHLDLSHNRLRALPPALAALRCLEVLQANDNAIESLDGVTNLPRLQELILCNNRLQQPAVLQPLTSCPRLTLLNLQGNPLCQAEGSSEHLAELLPSVSSILT.

PFTA repeat units lie at residues 44 to 78, 88 to 122, 124 to 158, 159 to 193, 207 to 241, and 363 to 397; these read LDES…QLEV, LVKA…RLPE, NWAR…QAAV, PPAE…QLHP, VLLK…RADP, and VLQS…ALDP. S98 carries the post-translational modification Phosphoserine. LRR repeat units lie at residues 442–463, 464–486, 487–508, 509–530, and 534–555; these read EVRV…EQLL, LVTH…AALR, CLEV…TNLP, RLQE…QPLT, and RLTL…SEHL.

It belongs to the protein prenyltransferase subunit alpha family. As to quaternary structure, heterotrimer composed of RABGGTA, RABGGTB and CHM; within this trimer, RABGGTA and RABGGTB form the catalytic component B, while CHM (component A) mediates peptide substrate binding. The Rab GGTase dimer (RGGT) interacts with CHM (component A) prior to Rab protein binding; the association is stabilized by geranylgeranyl pyrophosphate (GGpp). The CHM:RGGT:Rab complex is destabilized by GGpp. Interacts with non-phosphorylated form of RAB8A; phosphorylation of RAB8A at 'Thr-72' disrupts this interaction.

The enzyme catalyses geranylgeranyl diphosphate + L-cysteinyl-[protein] = S-geranylgeranyl-L-cysteinyl-[protein] + diphosphate. With respect to regulation, the enzymatic reaction requires the aid of a Rab escort protein (also called component A), such as CHM. In terms of biological role, catalyzes the transfer of a geranylgeranyl moiety from geranylgeranyl diphosphate to both cysteines of Rab proteins with the C-terminal sequence -XXCC, -XCXC and -CCXX, such as RAB1A, RAB3A, RAB5A and RAB7A. The polypeptide is Geranylgeranyl transferase type-2 subunit alpha (RABGGTA) (Bos taurus (Bovine)).